The primary structure comprises 217 residues: CXXC-type zinc finger protein 4 (217 aa).

The tract at residues 1–20 (MHRNDSQRLGKPGGAPESLQ) is disordered. Residues 122 to 163 (AKKKRKRCGVCVPCKRLINCGVCSSCRNRKTGHQICKFRKCE) form a CXXC-type zinc finger. Positions 129, 132, 135, 141, 144, 147, 157, and 162 each coordinate Zn(2+).

The protein resides in the cytoplasm. Its function is as follows. Acts as a negative regulator of the Wnt signaling pathway required for anterior neural structure formation. Ectopic expression induces ventralization. Binds preferentially to DNA containing cytidine-phosphate-guanosine (CpG) dinucleotides over CpH (H=A, T, and C), hemimethylated-CpG and hemimethylated-hydroxymethyl-CpG. This is CXXC-type zinc finger protein 4 (cxxc4) from Xenopus laevis (African clawed frog).